The chain runs to 126 residues: Small ribosomal subunit protein uS13 (126 aa).

The disordered stretch occupies residues 94–126 (RGLPVHGQRTSTNARTRKGPRRAIAGKKKPGKK). Basic residues predominate over residues 108-126 (RTRKGPRRAIAGKKKPGKK).

The protein belongs to the universal ribosomal protein uS13 family. In terms of assembly, part of the 30S ribosomal subunit. Forms a loose heterodimer with protein S19. Forms two bridges to the 50S subunit in the 70S ribosome.

Functionally, located at the top of the head of the 30S subunit, it contacts several helices of the 16S rRNA. In the 70S ribosome it contacts the 23S rRNA (bridge B1a) and protein L5 of the 50S subunit (bridge B1b), connecting the 2 subunits; these bridges are implicated in subunit movement. Contacts the tRNAs in the A and P-sites. The sequence is that of Small ribosomal subunit protein uS13 from Streptomyces griseus subsp. griseus (strain JCM 4626 / CBS 651.72 / NBRC 13350 / KCC S-0626 / ISP 5235).